The primary structure comprises 224 residues: Deoxyribose-phosphate aldolase (224 aa).

Residue Asp92 is the Proton donor/acceptor of the active site. Lys154 (schiff-base intermediate with acetaldehyde) is an active-site residue. Lys183 (proton donor/acceptor) is an active-site residue.

Belongs to the DeoC/FbaB aldolase family. DeoC type 1 subfamily.

Its subcellular location is the cytoplasm. The enzyme catalyses 2-deoxy-D-ribose 5-phosphate = D-glyceraldehyde 3-phosphate + acetaldehyde. It functions in the pathway carbohydrate degradation; 2-deoxy-D-ribose 1-phosphate degradation; D-glyceraldehyde 3-phosphate and acetaldehyde from 2-deoxy-alpha-D-ribose 1-phosphate: step 2/2. Functionally, catalyzes a reversible aldol reaction between acetaldehyde and D-glyceraldehyde 3-phosphate to generate 2-deoxy-D-ribose 5-phosphate. The sequence is that of Deoxyribose-phosphate aldolase from Mannheimia succiniciproducens (strain KCTC 0769BP / MBEL55E).